We begin with the raw amino-acid sequence, 298 residues long: 4-hydroxy-tetrahydrodipicolinate synthase (298 aa).

Thr-48 contributes to the pyruvate binding site. Tyr-137 functions as the Proton donor/acceptor in the catalytic mechanism. Catalysis depends on Lys-166, which acts as the Schiff-base intermediate with substrate. Ile-207 provides a ligand contact to pyruvate.

Belongs to the DapA family. Homotetramer; dimer of dimers.

It is found in the cytoplasm. The enzyme catalyses L-aspartate 4-semialdehyde + pyruvate = (2S,4S)-4-hydroxy-2,3,4,5-tetrahydrodipicolinate + H2O + H(+). Its pathway is amino-acid biosynthesis; L-lysine biosynthesis via DAP pathway; (S)-tetrahydrodipicolinate from L-aspartate: step 3/4. Functionally, catalyzes the condensation of (S)-aspartate-beta-semialdehyde [(S)-ASA] and pyruvate to 4-hydroxy-tetrahydrodipicolinate (HTPA). This is 4-hydroxy-tetrahydrodipicolinate synthase from Campylobacter jejuni subsp. jejuni serotype O:23/36 (strain 81-176).